Consider the following 169-residue polypeptide: Queuosine precursor transporter QueT (169 aa).

5 consecutive transmembrane segments (helical) span residues 9 to 29 (IVTI…PGLS), 44 to 64 (LNFT…GCMI), 73 to 93 (VDVI…VLLF), 110 to 130 (FFFF…ELKF), and 137 to 157 (LLTW…GAFI).

This sequence belongs to the vitamin uptake transporter (VUT/ECF) (TC 2.A.88) family. In E.coli forms a stable energy-coupling factor (ECF) transporter complex composed of 2 membrane-embedded substrate-binding protein (S component), 2 ATP-binding proteins (A and A' components) and 2 transmembrane proteins (T component), probably with a stoichiometry of 2:1:1:2. May be able to interact with more than 1 S component at a time.

The protein localises to the cell membrane. In terms of biological role, probably a queuosine precursor-binding protein that interacts with the energy-coupling factor (ECF) ABC-transporter complex. Unlike classic ABC transporters this ECF transporter provides the energy necessary to transport a number of different substrates. The substrates themselves are bound by transmembrane, not extracytoplasmic soluble proteins. This is Queuosine precursor transporter QueT (queT) from Lactococcus lactis subsp. cremoris (strain MG1363).